Reading from the N-terminus, the 835-residue chain is Leucine--tRNA ligase (835 aa).

A 'HIGH' region motif is present at residues 41-52 (PYPSGQGLHVGH). Positions 611–615 (KMSKS) match the 'KMSKS' region motif. Lys614 contributes to the ATP binding site.

Belongs to the class-I aminoacyl-tRNA synthetase family.

Its subcellular location is the cytoplasm. It catalyses the reaction tRNA(Leu) + L-leucine + ATP = L-leucyl-tRNA(Leu) + AMP + diphosphate. The polypeptide is Leucine--tRNA ligase (Elusimicrobium minutum (strain Pei191)).